Consider the following 836-residue polypeptide: DNA-directed RNA polymerase subunit beta' (836 aa).

Positions 71, 73, 90, and 93 each coordinate Zn(2+). Mg(2+) contacts are provided by D623, D625, and D627.

Belongs to the RNA polymerase beta' chain family. RpoC1 subfamily. As to quaternary structure, in plastids the minimal PEP RNA polymerase catalytic core is composed of four subunits: alpha, beta, beta', and beta''. When a (nuclear-encoded) sigma factor is associated with the core the holoenzyme is formed, which can initiate transcription. Mg(2+) is required as a cofactor. The cofactor is Zn(2+).

Its subcellular location is the plastid. The protein resides in the chloroplast. The enzyme catalyses RNA(n) + a ribonucleoside 5'-triphosphate = RNA(n+1) + diphosphate. DNA-dependent RNA polymerase catalyzes the transcription of DNA into RNA using the four ribonucleoside triphosphates as substrates. This chain is DNA-directed RNA polymerase subunit beta' (rpoC1), found in Chlorella vulgaris (Green alga).